The following is a 44-amino-acid chain: U4-ctenitoxin-Pk1a (44 aa).

Disulfide bonds link Cys4/Cys18, Cys11/Cys24, Cys15/Cys42, Cys17/Cys33, and Cys26/Cys31.

Expressed by the venom gland.

It is found in the secreted. Neurotoxin. Causes spastic paralysis and death in mice within 10 minutes at dose levels of 3 ug per mouse. In Phoneutria keyserlingi (Brazilian wandering spider), this protein is U4-ctenitoxin-Pk1a.